The sequence spans 309 residues: Mitochondrial substrate carrier family protein ancA (309 aa).

Solcar repeat units follow at residues 10 to 102 (SSFV…YKKF), 114 to 203 (KFFI…AKGI), and 216 to 299 (ASWG…IQKL). The next 5 helical transmembrane spans lie at 12-41 (FVKD…LLLQ), 79-103 (LANV…KKFF), 113-133 (TKFF…SLLF), 181-201 (VSVG…DTAK), and 215-235 (WASW…SYPF). The ADP site is built by arginine 84 and lysine 96. ADP is bound at residue arginine 239. Positions 239-244 (RRRMMM) are important for transport activity. Residues 239–244 (RRRMMM) carry the Nucleotide carrier signature motif motif. A helical membrane pass occupies residues 276 to 293 (ALSNAIRGSGGALVLVIY).

It belongs to the mitochondrial carrier (TC 2.A.29) family. As to quaternary structure, monomer.

Its subcellular location is the mitochondrion inner membrane. It catalyses the reaction ADP(in) + ATP(out) = ADP(out) + ATP(in). Its activity is regulated as follows. The matrix-open state (m-state) is inhibited by the membrane-permeable bongkrekic acid (BKA). The cytoplasmic-open state (c-state) is inhibited by the membrane-impermeable toxic inhibitor carboxyatractyloside (CATR). Functionally, ADP:ATP antiporter that mediates import of ADP into the mitochondrial matrix for ATP synthesis, and export of ATP out to fuel the cell. Cycles between the cytoplasmic-open state (c-state) and the matrix-open state (m-state): operates by the alternating access mechanism with a single substrate-binding site intermittently exposed to either the cytosolic (c-state) or matrix (m-state) side of the inner mitochondrial membrane. This chain is Mitochondrial substrate carrier family protein ancA (ancA), found in Dictyostelium discoideum (Social amoeba).